Consider the following 106-residue polypeptide: Apovitellenin-1 (106 aa).

The first 24 residues, 1-24 (MVQYRALVIAVILLLSTTVPEVHS), serve as a signal peptide directing secretion.

Belongs to the apovitellenin family. As to quaternary structure, homodimer; disulfide-linked. As to expression, produced by the liver, secreted into the blood and then sequestred by receptor mediated endocytosis into growing oocytes.

Functionally, protein component of the very low density lipoprotein (VLDL) of egg-laying females. Potent lipoprotein lipase inhibitor, preventing the loss of triglycerides from VLDL on their way from the liver to the growing oocytes. The chain is Apovitellenin-1 from Gallus gallus (Chicken).